Reading from the N-terminus, the 577-residue chain is Solute carrier family 22 member 16 (577 aa).

Residues Leu23–Phe43 form a helical membrane-spanning segment. 4 N-linked (GlcNAc...) asparagine glycosylation sites follow: Asn57, Asn65, Asn68, and Asn108. 5 helical membrane-spanning segments follow: residues Trp152–Phe172, Val183–Val203, Phe214–Ile234, Val244–Val264, and Trp268–Leu288. 2 N-linked (GlcNAc...) asparagine glycosylation sites follow: Asn345 and Asn352. 6 helical membrane passes run Thr359–Asn379, Leu389–Met409, Thr416–Pro436, Ile441–Ile461, Leu476–Val496, and Ile501–Thr521. The segment at Glu543–Glu577 is disordered. Asn546 and Asn558 each carry an N-linked (GlcNAc...) asparagine glycan. Residues Ser551 to Ser560 show a composition bias toward low complexity.

The protein belongs to the major facilitator (TC 2.A.1) superfamily. Organic cation transporter (TC 2.A.1.19) family. In terms of tissue distribution, expressed in testis and epididymis (at protein level). Expressed in endometrium (at protein level); highly expressed during the normal secretory phase, but expression is significantly reduced in the proliferative phase. Expressed at lower levels in adult tissues including bone marrow (at protein level). Expressed in hematopoietic cells, including CD34(+) leukocytes. Expressed in fetal liver (at protein level), brain, lung, kidney, heart, skeletal muscle, spleen and thymus. Expressed in leukemia cells. Abundantly expressed in ovarian cancer clear-cell adenocarcinoma.

It localises to the cell membrane. The enzyme catalyses (R)-carnitine(in) = (R)-carnitine(out). It carries out the reaction spermidine(in) = spermidine(out). Facilitative organic cation transporter that mediates the transport of carnitine as well as the polyamine spermidine. Mediates the partially Na(+)-dependent bidirectional transport of carnitine. May mediate L-carnitine secretion from testis epididymal epithelium into the lumen which is involved in the maturation of spermatozoa. The polypeptide is Solute carrier family 22 member 16 (Homo sapiens (Human)).